Here is a 168-residue protein sequence, read N- to C-terminus: Nucleoside deoxyribosyltransferase (168 aa).

The Nucleophile role is filled by glutamate 103.

This sequence belongs to the nucleoside deoxyribosyltransferase family.

The enzyme catalyses 2-deoxy-D-ribosyl-base(1) + base(2) = 2-deoxy-D-ribosyl-base(2) + base(1).. It participates in nucleotide metabolism; nucleotide salvage pathway. In terms of biological role, catalyzes the cleavage of the glycosidic bond of 2'-deoxyribonucleosides and the transfer of the deoxyribosyl moiety to an acceptor purine or pyrimidine base. The chain is Nucleoside deoxyribosyltransferase (ntd) from Limosilactobacillus fermentum (Lactobacillus fermentum).